A 647-amino-acid polypeptide reads, in one-letter code: Pre-mRNA-splicing factor SLU7 (647 aa).

The segment covering 1-19 (MASYKQNLPPSALIKQQVN) has biased composition (polar residues). Residues 1–44 (MASYKQNLPPSALIKQQVNVADKKSKAEVQRDRQLEEDRKAGTA) form a disordered region. The span at 21-41 (ADKKSKAEVQRDRQLEEDRKA) shows a compositional bias: basic and acidic residues. The segment at 113-130 (GACENCGAMGHQKRDCFD) adopts a CCHC-type zinc-finger fold. Disordered stretches follow at residues 193 to 212 (HEMK…APKD) and 465 to 620 (EVKE…KEME). The segment covering 465 to 479 (EVKEEKEKEDSIKDE) has biased composition (basic and acidic residues). The segment covering 480–491 (VAEENSDNDNDE) has biased composition (acidic residues). Residues 513-533 (EKEREKERLIEKERRERDQRR) are compositionally biased toward basic and acidic residues. Residues 534 to 555 (RDKKREKRERKKAKLGKRKRRH) show a composition bias toward basic residues. Over residues 588-606 (EKAEGMKAAREGDRGRKYN) the composition is skewed to basic and acidic residues.

It belongs to the SLU7 family.

The protein localises to the nucleus. Functionally, participates in the second catalytic step of pre-mRNA splicing, when the free hydroxyl group of exon I attacks the 3'-splice site to generate spliced mRNA and the excised lariat intron. The protein is Pre-mRNA-splicing factor SLU7 of Caenorhabditis elegans.